A 128-amino-acid chain; its full sequence is Large ribosomal subunit protein eL22 (128 aa).

The residue at position 62 (threonine 62) is a Phosphothreonine. At serine 66 the chain carries Phosphoserine. Lysine 69 carries the N6-succinyllysine modification.

It belongs to the eukaryotic ribosomal protein eL22 family. Component of the large ribosomal subunit.

It localises to the cytoplasm. Functionally, component of the large ribosomal subunit. The ribosome is a large ribonucleoprotein complex responsible for the synthesis of proteins in the cell. This is Large ribosomal subunit protein eL22 (RPL22) from Oryctolagus cuniculus (Rabbit).